Reading from the N-terminus, the 953-residue chain is Glycine dehydrogenase (decarboxylating) (953 aa).

Position 705 is an N6-(pyridoxal phosphate)lysine (K705).

This sequence belongs to the GcvP family. In terms of assembly, the glycine cleavage system is composed of four proteins: P, T, L and H. It depends on pyridoxal 5'-phosphate as a cofactor.

It catalyses the reaction N(6)-[(R)-lipoyl]-L-lysyl-[glycine-cleavage complex H protein] + glycine + H(+) = N(6)-[(R)-S(8)-aminomethyldihydrolipoyl]-L-lysyl-[glycine-cleavage complex H protein] + CO2. Its function is as follows. The glycine cleavage system catalyzes the degradation of glycine. The P protein binds the alpha-amino group of glycine through its pyridoxal phosphate cofactor; CO(2) is released and the remaining methylamine moiety is then transferred to the lipoamide cofactor of the H protein. The polypeptide is Glycine dehydrogenase (decarboxylating) (Sodalis glossinidius (strain morsitans)).